A 142-amino-acid polypeptide reads, in one-letter code: Large ribosomal subunit protein uL13c (142 aa).

This sequence belongs to the universal ribosomal protein uL13 family. In terms of assembly, part of the 50S ribosomal subunit.

The protein resides in the plastid. Its subcellular location is the chloroplast. This is Large ribosomal subunit protein uL13c from Porphyra purpurea (Red seaweed).